The primary structure comprises 209 residues: MEGDGPAATAPQYQPVCPTRDACVYNSCYCEENIWKLCEYIKTHNQYLLEECYAVFISNEKKMVPIWKQQARPENGPVIWDYHVVLLHVSREGQSFIYDLDTILPFPCPFDIYIEDALKSDDDIHLQFRRKFRVVRADSYLKHFASDRSHMKDSSGNWREPPPEYPCIETGDSKMNLNDFISMDPAVGWGAVYTLPEFVHRFSSKTYQA.

Catalysis depends on residues Cys30, His83, and Asp99.

This sequence belongs to the NTAQ1 family. Monomer. In terms of tissue distribution, widely expressed.

It is found in the cytoplasm. The protein resides in the cytosol. It localises to the nucleus. It catalyses the reaction N-terminal L-glutaminyl-[protein] + H2O = N-terminal L-glutamyl-[protein] + NH4(+). In terms of biological role, mediates the side-chain deamidation of N-terminal glutamine residues to glutamate, an important step in N-end rule pathway of protein degradation. Conversion of the resulting N-terminal glutamine to glutamate renders the protein susceptible to arginylation, polyubiquitination and degradation as specified by the N-end rule. Does not act on substrates with internal or C-terminal glutamine and does not act on non-glutamine residues in any position. Does not deaminate acetylated N-terminal glutamine. With the exception of proline, all tested second-position residues on substrate peptides do not greatly influence the activity. In contrast, a proline at position 2, virtually abolishes deamidation of N-terminal glutamine. The protein is Protein N-terminal glutamine amidohydrolase (Ntaq1) of Mus musculus (Mouse).